We begin with the raw amino-acid sequence, 72 residues long: Protein RALF-like 12 (72 aa).

Residues 1 to 17 (MKAWVIGLLVICAVVIA) form the signal peptide. Intrachain disulfides connect C34/C43 and C63/C69. Residues 37 to 60 (PNPPPGCNPPGTEQKNPTPVNEYS) are disordered.

This sequence belongs to the plant rapid alkalinization factor (RALF) family.

It localises to the secreted. In terms of biological role, cell signaling peptide that may regulate plant stress, growth, and development. Mediates a rapid alkalinization of extracellular space by mediating a transient increase in the cytoplasmic Ca(2+) concentration leading to a calcium-dependent signaling events through a cell surface receptor and a concomitant activation of some intracellular mitogen-activated protein kinases. This chain is Protein RALF-like 12 (RALFL12), found in Arabidopsis thaliana (Mouse-ear cress).